A 119-amino-acid polypeptide reads, in one-letter code: Mitochondrial coiled-coil domain protein 1 (119 aa).

A mitochondrion-targeting transit peptide spans Met-1–Ala-24. Residues Pro-25 to Ala-65 form a disordered region. The segment covering Cys-31–Met-52 has biased composition (polar residues). A coiled-coil region spans residues His-62–Gly-116.

In terms of tissue distribution, widely expressed. Expressed in adult and fetal liver, kidney and lung. Expressed in fetal brain. Weakly expressed in fetal spleen.

Its subcellular location is the mitochondrion. The sequence is that of Mitochondrial coiled-coil domain protein 1 (MCCD1) from Homo sapiens (Human).